The chain runs to 713 residues: Polyribonucleotide nucleotidyltransferase (713 aa).

2 residues coordinate Mg(2+): Asp-498 and Asp-504. The KH domain maps to 565–631; that stretch reads PRILSLKVPV…RIEDLTREAK (67 aa). One can recognise an S1 motif domain in the interval 633-701; that stretch reads GEIYEGTVTR…ERGKIDLIRP (69 aa).

The protein belongs to the polyribonucleotide nucleotidyltransferase family. It depends on Mg(2+) as a cofactor.

The protein resides in the cytoplasm. It catalyses the reaction RNA(n+1) + phosphate = RNA(n) + a ribonucleoside 5'-diphosphate. In terms of biological role, involved in mRNA degradation. Catalyzes the phosphorolysis of single-stranded polyribonucleotides processively in the 3'- to 5'-direction. The polypeptide is Polyribonucleotide nucleotidyltransferase (Thermus thermophilus).